Consider the following 463-residue polypeptide: Argininosuccinate lyase (463 aa).

It belongs to the lyase 1 family. Argininosuccinate lyase subfamily.

It localises to the cytoplasm. It catalyses the reaction 2-(N(omega)-L-arginino)succinate = fumarate + L-arginine. Its pathway is amino-acid biosynthesis; L-arginine biosynthesis; L-arginine from L-ornithine and carbamoyl phosphate: step 3/3. The polypeptide is Argininosuccinate lyase (Streptococcus pneumoniae (strain 70585)).